Reading from the N-terminus, the 225-residue chain is Ribonuclease HII (225 aa).

One can recognise an RNase H type-2 domain in the interval 28–220; sequence DIIAGTDEVG…VKEYVDISQE (193 aa). Residues Asp34, Glu35, and Asp129 each contribute to the a divalent metal cation site.

The protein belongs to the RNase HII family. Mn(2+) is required as a cofactor. It depends on Mg(2+) as a cofactor.

The protein resides in the cytoplasm. The enzyme catalyses Endonucleolytic cleavage to 5'-phosphomonoester.. In terms of biological role, endonuclease that specifically degrades the RNA of RNA-DNA hybrids. This chain is Ribonuclease HII, found in Desulfotalea psychrophila (strain LSv54 / DSM 12343).